Here is a 72-residue protein sequence, read N- to C-terminus: MLVITRKKGESFLIGDDIEITVVKLDDGSVKLAIDAPKKLTILRKELYNEVQEENKKATNFNPSILKNIKSK.

It belongs to the CsrA/RsmA family. As to quaternary structure, homodimer; the beta-strands of each monomer intercalate to form a hydrophobic core, while the alpha-helices form wings that extend away from the core.

The protein localises to the cytoplasm. Functionally, a translational regulator that binds mRNA to regulate translation initiation and/or mRNA stability. Usually binds in the 5'-UTR at or near the Shine-Dalgarno sequence preventing ribosome-binding, thus repressing translation. Its main target seems to be the major flagellin gene, while its function is anatagonized by FliW. This chain is Translational regulator CsrA, found in Clostridium botulinum (strain Loch Maree / Type A3).